The sequence spans 353 residues: MMTLKVCPSLLLLFLVHSVWTRTVRQVYNELDPEHWSHYTFECPQECFCPPSFPNALYCDNKGLKEIPAIPARIWYLYLQNNLIETISEKPFVNATHLRWINLNKNKITNNGIESGVLSKLKRLLYLFLEDNELEEVPAPLPVGLEQLRLARNKISRIPEGVFSNLENLTMLDLHQNNLLDSALQSDTFQGLNSLMQLNIAKNSLKKMPLSIPANTLQLFLDNNSIEVIPENYFSAIPKVTFLRLNYNKLSDDGIPPNGFNVSSILDLQLSHNQLTKIPPINAHLEHLHLDHNRIKSVNGTQICPVSIAVAEDYGLYGNIPRLRYLRLDGNEIQPPIPLDIMICFQLLQAVVI.

The signal sequence occupies residues 1–21 (MMTLKVCPSLLLLFLVHSVWT). The LRRNT domain occupies 34-72 (EHWSHYTFECPQECFCPPSFPNALYCDNKGLKEIPAIPA). 2 disulfides stabilise this stretch: cysteine 43/cysteine 49 and cysteine 47/cysteine 59. 10 LRR repeats span residues 73-94 (RIWY…PFVN), 97-118 (HLRW…SGVL), 123-143 (RLLY…PLPV), 144-165 (GLEQ…VFSN), 168-188 (NLTM…QSDT), 194-214 (SLMQ…SIPA), 215-236 (NTLQ…YFSA), 239-262 (KVTF…GFNV), 264-283 (SILD…PINA), and 284-305 (HLEH…QICP). The N-linked (GlcNAc...) (keratan sulfate) asparagine glycan is linked to asparagine 94. The N-linked (GlcNAc...) asparagine glycan is linked to asparagine 168. Residues asparagine 223 and asparagine 261 are each glycosylated (N-linked (GlcNAc...) (keratan sulfate) asparagine). The N-linked (GlcNAc...) asparagine glycan is linked to asparagine 299. A disulfide bond links cysteine 304 and cysteine 344.

This sequence belongs to the small leucine-rich proteoglycan (SLRP) family. SLRP class II subfamily. In terms of processing, binds keratan sulfate chains.

The protein resides in the secreted. The protein localises to the extracellular space. Its subcellular location is the extracellular matrix. Plays an important role in generating and maintaining a transparent matrix within the corneal stroma. This chain is Keratocan (KERA), found in Gallus gallus (Chicken).